Reading from the N-terminus, the 87-residue chain is Large ribosomal subunit protein bL27 (87 aa).

Residues 1–21 (MAHKKGGGSTRNGRDSASKRL) form a disordered region.

The protein belongs to the bacterial ribosomal protein bL27 family.

This is Large ribosomal subunit protein bL27 from Amoebophilus asiaticus (strain 5a2).